A 163-amino-acid chain; its full sequence is Epithelial membrane protein 3 (163 aa).

The chain crosses the membrane as a helical span at residues Leu-4–Leu-24. 2 N-linked (GlcNAc...) asparagine glycosylation sites follow: Asn-47 and Asn-56. The next 3 membrane-spanning stretches (helical) occupy residues Val-66–Phe-86, Thr-100–Ile-120, and Phe-139–Leu-159.

It belongs to the PMP-22/EMP/MP20 family.

The protein localises to the membrane. Its function is as follows. Probably involved in cell proliferation and cell-cell interactions. This is Epithelial membrane protein 3 (EMP3) from Homo sapiens (Human).